The primary structure comprises 396 residues: S-adenosylmethionine synthase (396 aa).

An ATP-binding site is contributed by histidine 15. Aspartate 17 contacts Mg(2+). K(+) is bound at residue glutamate 43. 2 residues coordinate L-methionine: glutamate 56 and glutamine 99. A flexible loop region spans residues 99–109; sequence QSPDIALGVNR. ATP-binding positions include 175–177, 241–242, aspartate 250, 256–257, alanine 273, and lysine 277; these read DGK, RF, and RK. Aspartate 250 contributes to the L-methionine binding site. Lysine 281 provides a ligand contact to L-methionine.

Belongs to the AdoMet synthase family. Homotetramer; dimer of dimers. Mg(2+) is required as a cofactor. The cofactor is K(+).

It localises to the cytoplasm. The enzyme catalyses L-methionine + ATP + H2O = S-adenosyl-L-methionine + phosphate + diphosphate. Its pathway is amino-acid biosynthesis; S-adenosyl-L-methionine biosynthesis; S-adenosyl-L-methionine from L-methionine: step 1/1. Catalyzes the formation of S-adenosylmethionine (AdoMet) from methionine and ATP. The overall synthetic reaction is composed of two sequential steps, AdoMet formation and the subsequent tripolyphosphate hydrolysis which occurs prior to release of AdoMet from the enzyme. This chain is S-adenosylmethionine synthase, found in Carboxydothermus hydrogenoformans (strain ATCC BAA-161 / DSM 6008 / Z-2901).